We begin with the raw amino-acid sequence, 170 residues long: Odorant-binding protein 2a (170 aa).

The N-terminal stretch at 1 to 15 is a signal peptide; it reads MKTLFLGVTLGLAAA. A disulfide bond links Cys-74 and Cys-166.

This sequence belongs to the calycin superfamily. Lipocalin family. Monomer. As to expression, strongly expressed in the nasal structures, salivary and lachrymal glands, and lung. Expressed in the liver.

Its subcellular location is the secreted. Binds and transports small hydrophobic volatile molecules with a higher affinity for aldehydes and large fatty acids, including undecanal, palmitic acid, efficient aldehydes, benzenic aldehydes, heterocyclic aldehydes and aliphatic acids. The polypeptide is Odorant-binding protein 2a (OBP2A) (Homo sapiens (Human)).